The primary structure comprises 149 residues: MKCPFCSHLETQVIETRVFEDAASIRRRRQCAACSKRFTTYERSDVSFPAVVKKDGRRVEYGHDKLLASFKLALRKRPVSTGRIDSAIERIEEKLLNLGLREVPSSRIGELVMRELKKLDKVAYIRFASVYRSFEGIDDFRALVDEVRK.

A zinc finger lies at C3 to C34. In terms of domain architecture, ATP-cone spans P49–D139.

Belongs to the NrdR family. Zn(2+) is required as a cofactor.

Its function is as follows. Negatively regulates transcription of bacterial ribonucleotide reductase nrd genes and operons by binding to NrdR-boxes. The chain is Transcriptional repressor NrdR from Verminephrobacter eiseniae (strain EF01-2).